A 124-amino-acid polypeptide reads, in one-letter code: Aspartate 1-decarboxylase (124 aa).

The active-site Schiff-base intermediate with substrate; via pyruvic acid is the Ser-21. At Ser-21 the chain carries Pyruvic acid (Ser). Thr-53 serves as a coordination point for substrate. Tyr-54 acts as the Proton donor in catalysis. 69–71 (GAA) contacts substrate.

It belongs to the PanD family. In terms of assembly, heterooctamer of four alpha and four beta subunits. Pyruvate is required as a cofactor. In terms of processing, is synthesized initially as an inactive proenzyme, which is activated by self-cleavage at a specific serine bond to produce a beta-subunit with a hydroxyl group at its C-terminus and an alpha-subunit with a pyruvoyl group at its N-terminus.

It localises to the cytoplasm. The catalysed reaction is L-aspartate + H(+) = beta-alanine + CO2. It functions in the pathway cofactor biosynthesis; (R)-pantothenate biosynthesis; beta-alanine from L-aspartate: step 1/1. Catalyzes the pyruvoyl-dependent decarboxylation of aspartate to produce beta-alanine. In Dehalococcoides mccartyi (strain CBDB1), this protein is Aspartate 1-decarboxylase.